The primary structure comprises 620 residues: MAAVRGLRVSVKAEAPAGPALGLPSPEAESGVDRGEPEPMEVEEGELEIVPVRRSLKELIPDTSRRYENKAGSFITGIDVTSKEAIEKKEQRAKRFHFRSEVNLAQRNVALDRDMMKKAIPKVRLETIYICGVDEMSTQDVFSYFKEYPPAHIEWLDDTSCNVVWLDEMTATRALINMSSLPAQDKIRSRDASEDKSAEKRKKDKQEDSSDDDEAEEGEVEDENSSDVELDTLSQVEEESLLRNDLRPANKLAKGNRLFMRFATKDDKKELGAARRSQYYMKYGNPNYGGMKGILSNSWKRRYHSRRIQRDVIKKRALIGDDVGLTSYKHRHSGLVNVPEEPIEEEEEEEEEEEEEEEEDQDMDADDRVVVEYHEELPALKQPRERSASRRSSASSSDSDEMDYDLELKMISTPSPKKSMKMTMYADEVESQLKNIRNSMRADSVSSSNIKNRIGNKLPPEKFADVRHLLDEKRQHSRPRPPVSSTKSDIRQRLGKRPHSPEKAFSSNPVVRREPSSDVHSRLGVPRQDSKGLYADTREKKSGNLWTRLGSAPKTKEKNTKKVDHRAPGAEEDDSELQRAWGALIKEKEQSRQKKSRLDNLPSLQIEVSRESSSGSEAES.

K12 is covalently cross-linked (Glycyl lysine isopeptide (Lys-Gly) (interchain with G-Cter in SUMO2)). The segment covering 15–28 (APAGPALGLPSPEA) has biased composition (low complexity). The disordered stretch occupies residues 15–42 (APAGPALGLPSPEAESGVDRGEPEPMEV). S25 carries the phosphoserine modification. Residue K70 forms a Glycyl lysine isopeptide (Lys-Gly) (interchain with G-Cter in SUMO2) linkage. S73 bears the Phosphoserine mark. Residues 126-187 (ETIYICGVDE…MSSLPAQDKI (62 aa)) form an RNA recognition motif (RRM) domain region. The WLDD motif; essential for 7-methylguanosine-containing mRNA cap binding signature appears at 155–158 (WLDD). Residues 185-198 (DKIRSRDASEDKSA) are compositionally biased toward basic and acidic residues. Disordered stretches follow at residues 185–233 (DKIR…LDTL), 332–419 (HSGL…PKKS), and 436–620 (IRNS…EAES). Residue K186 forms a Glycyl lysine isopeptide (Lys-Gly) (interchain with G-Cter in SUMO2) linkage. A phosphoserine mark is found at S209 and S210. 2 stretches are compositionally biased toward acidic residues: residues 209–230 (SSDD…DVEL) and 341–365 (EPIE…DMDA). Residues 366-388 (DDRVVVEYHEELPALKQPRERSA) show a composition bias toward basic and acidic residues. T413 carries the post-translational modification Phosphothreonine. A Phosphoserine modification is found at S415. Basic and acidic residues-rich tracts occupy residues 459-474 (PPEK…DEKR) and 511-521 (VRREPSSDVHS). K541 is covalently cross-linked (Glycyl lysine isopeptide (Lys-Gly) (interchain with G-Cter in SUMO2)). 2 stretches are compositionally biased toward basic and acidic residues: residues 554-569 (KTKE…RAPG) and 585-598 (IKEK…KSRL). The segment covering 611–620 (ESSSGSEAES) has biased composition (low complexity). At S620 the chain carries Phosphoserine.

Belongs to the NCBP3 family. Component of an alternative cap-binding complex (CBC) composed of NCBP1/CBP80 and NCBP3. Interacts with SRRT, KPNA3, THOC5 and EIF4A3.

The protein localises to the nucleus. Its subcellular location is the cytoplasm. Associates with NCBP1/CBP80 to form an alternative cap-binding complex (CBC) which plays a key role in mRNA export. NCBP3 serves as adapter protein linking the capped RNAs (m7GpppG-capped RNA) to NCBP1/CBP80. Unlike the conventional CBC with NCBP2 which binds both small nuclear RNA (snRNA) and messenger (mRNA) and is involved in their export from the nucleus, the alternative CBC with NCBP3 does not bind snRNA and associates only with mRNA thereby playing a role in only mRNA export. The alternative CBC is particularly important in cellular stress situations such as virus infections and the NCBP3 activity is critical to inhibit virus growth. This Homo sapiens (Human) protein is Nuclear cap-binding protein subunit 3.